The sequence spans 683 residues: Leucine zipper putative tumor suppressor 2 homolog (683 aa).

3 disordered regions span residues 1 to 37 (MAAL…TMGS), 82 to 107 (YSSQ…NNGN), and 262 to 320 (MGHI…CDRS). Polar residues-rich tracts occupy residues 11–37 (IDQN…TMGS) and 96–107 (KPSTTTSGNNGN). Residues 290-308 (SDSGRSSSSKSTGSLSGRG) are compositionally biased toward low complexity. Residues 324-665 (SDEILIRELE…LELEARELDE (342 aa)) are a coiled coil.

Belongs to the LZTS2 family.

Its subcellular location is the cytoplasm. The protein localises to the cytoskeleton. The protein resides in the microtubule organizing center. It localises to the centrosome. In terms of biological role, negative regulator of katanin-mediated microtubule severing and release from the centrosome. Required for central spindle formation and the completion of cytokinesis. Negative regulator of the Wnt signaling pathway. Represses beta-catenin-mediated transcriptional activation by promoting the nuclear exclusion of beta-catenin. The sequence is that of Leucine zipper putative tumor suppressor 2 homolog (lzts2) from Xenopus tropicalis (Western clawed frog).